The sequence spans 176 residues: ATP synthase subunit delta (176 aa).

This sequence belongs to the ATPase delta chain family. As to quaternary structure, F-type ATPases have 2 components, F(1) - the catalytic core - and F(0) - the membrane proton channel. F(1) has five subunits: alpha(3), beta(3), gamma(1), delta(1), epsilon(1). F(0) has three main subunits: a(1), b(2) and c(10-14). The alpha and beta chains form an alternating ring which encloses part of the gamma chain. F(1) is attached to F(0) by a central stalk formed by the gamma and epsilon chains, while a peripheral stalk is formed by the delta and b chains.

The protein localises to the cell inner membrane. F(1)F(0) ATP synthase produces ATP from ADP in the presence of a proton or sodium gradient. F-type ATPases consist of two structural domains, F(1) containing the extramembraneous catalytic core and F(0) containing the membrane proton channel, linked together by a central stalk and a peripheral stalk. During catalysis, ATP synthesis in the catalytic domain of F(1) is coupled via a rotary mechanism of the central stalk subunits to proton translocation. Functionally, this protein is part of the stalk that links CF(0) to CF(1). It either transmits conformational changes from CF(0) to CF(1) or is implicated in proton conduction. This is ATP synthase subunit delta from Wolinella succinogenes (strain ATCC 29543 / DSM 1740 / CCUG 13145 / JCM 31913 / LMG 7466 / NCTC 11488 / FDC 602W) (Vibrio succinogenes).